The sequence spans 225 residues: MTQDELKQAVAKAAVDHIAPHLEPSSIVGVGTGSTANFFIDYLAEYRNDFDGAVASSEATAERLKKHGIPVYDLNAVNEIEFYVDGADETNESLELIKGGGGALTREKIVAAVAKTFICIADESKQVGILGEFPLPVEVIPMARSHVGREIVKLGGDPVYRDGFVTDNGNIIIDIHNMDISRPLVVEEKLNNIVGVVTNGLFARRPADLLLLGTRDGVKSIARGA.

Residues 32-35 (TGST), 85-88 (DGAD), and 98-101 (KGGG) contribute to the substrate site. Glu-107 serves as the catalytic Proton acceptor. Lys-125 provides a ligand contact to substrate.

It belongs to the ribose 5-phosphate isomerase family. Homodimer.

The catalysed reaction is aldehydo-D-ribose 5-phosphate = D-ribulose 5-phosphate. It functions in the pathway carbohydrate degradation; pentose phosphate pathway; D-ribose 5-phosphate from D-ribulose 5-phosphate (non-oxidative stage): step 1/1. Functionally, catalyzes the reversible conversion of ribose-5-phosphate to ribulose 5-phosphate. In Marinobacter nauticus (strain ATCC 700491 / DSM 11845 / VT8) (Marinobacter aquaeolei), this protein is Ribose-5-phosphate isomerase A.